A 484-amino-acid polypeptide reads, in one-letter code: tRNA-2-methylthio-N(6)-dimethylallyladenosine synthase (484 aa).

One can recognise an MTTase N-terminal domain in the interval 36–153; that stretch reads GKLYIKTHGC…LPELIRARRE (118 aa). [4Fe-4S] cluster is bound by residues cysteine 45, cysteine 82, cysteine 116, cysteine 190, cysteine 194, and cysteine 197. The region spanning 176 to 415 is the Radical SAM core domain; that stretch reads RAEGPSAFVS…HINAHAASIS (240 aa). Positions 416–479 constitute a TRAM domain; that stretch reads QSMVGSVQRV…SNSLRGRIQL (64 aa). The segment at 428 to 450 is disordered; sequence EGPSRRDPNELTGKSENMRPVNF.

Belongs to the methylthiotransferase family. MiaB subfamily. As to quaternary structure, monomer. Requires [4Fe-4S] cluster as cofactor.

It is found in the cytoplasm. The enzyme catalyses N(6)-dimethylallyladenosine(37) in tRNA + (sulfur carrier)-SH + AH2 + 2 S-adenosyl-L-methionine = 2-methylsulfanyl-N(6)-dimethylallyladenosine(37) in tRNA + (sulfur carrier)-H + 5'-deoxyadenosine + L-methionine + A + S-adenosyl-L-homocysteine + 2 H(+). Its function is as follows. Catalyzes the methylthiolation of N6-(dimethylallyl)adenosine (i(6)A), leading to the formation of 2-methylthio-N6-(dimethylallyl)adenosine (ms(2)i(6)A) at position 37 in tRNAs that read codons beginning with uridine. The sequence is that of tRNA-2-methylthio-N(6)-dimethylallyladenosine synthase from Xanthomonas euvesicatoria pv. vesicatoria (strain 85-10) (Xanthomonas campestris pv. vesicatoria).